The following is a 163-amino-acid chain: Transcriptional repressor NrdR (163 aa).

Residues 3-34 fold into a zinc finger; sequence CPFCRHPDSRVVDSRVSDDGSSIRRRRQCPQC. Residues 46-136 form the ATP-cone domain; the sequence is LTVIKRSGIG…VYQAFESLDD (91 aa).

The protein belongs to the NrdR family. The cofactor is Zn(2+).

Its function is as follows. Negatively regulates transcription of bacterial ribonucleotide reductase nrd genes and operons by binding to NrdR-boxes. The polypeptide is Transcriptional repressor NrdR (Renibacterium salmoninarum (strain ATCC 33209 / DSM 20767 / JCM 11484 / NBRC 15589 / NCIMB 2235)).